Here is a 443-residue protein sequence, read N- to C-terminus: ATP-dependent protease ATPase subunit HslU (443 aa).

ATP contacts are provided by residues Ile18, 60–65 (GVGKTE), Asp256, Glu321, and Arg393.

Belongs to the ClpX chaperone family. HslU subfamily. As to quaternary structure, a double ring-shaped homohexamer of HslV is capped on each side by a ring-shaped HslU homohexamer. The assembly of the HslU/HslV complex is dependent on binding of ATP.

It is found in the cytoplasm. ATPase subunit of a proteasome-like degradation complex; this subunit has chaperone activity. The binding of ATP and its subsequent hydrolysis by HslU are essential for unfolding of protein substrates subsequently hydrolyzed by HslV. HslU recognizes the N-terminal part of its protein substrates and unfolds these before they are guided to HslV for hydrolysis. The chain is ATP-dependent protease ATPase subunit HslU from Edwardsiella ictaluri (strain 93-146).